The sequence spans 484 residues: Glycogen synthase (484 aa).

Lysine 15 is an ADP-alpha-D-glucose binding site.

This sequence belongs to the glycosyltransferase 1 family. Bacterial/plant glycogen synthase subfamily.

It catalyses the reaction [(1-&gt;4)-alpha-D-glucosyl](n) + ADP-alpha-D-glucose = [(1-&gt;4)-alpha-D-glucosyl](n+1) + ADP + H(+). The protein operates within glycan biosynthesis; glycogen biosynthesis. In terms of biological role, synthesizes alpha-1,4-glucan chains using ADP-glucose. The chain is Glycogen synthase (glgA) from Bacillus subtilis (strain 168).